A 254-amino-acid polypeptide reads, in one-letter code: Sugar fermentation stimulation protein homolog (254 aa).

Belongs to the SfsA family.

The polypeptide is Sugar fermentation stimulation protein homolog (Parasynechococcus marenigrum (strain WH8102)).